The chain runs to 1000 residues: Peroxisomal ATPase PEX6 (1000 aa).

Residue 742-749 coordinates ATP; sequence GPPGTGKT.

This sequence belongs to the AAA ATPase family. In terms of assembly, interacts with PEX1; forming the PEX1-PEX6 AAA ATPase complex, which is composed of a heterohexamer formed by a trimer of PEX1-PEX6 dimers.

The protein resides in the cytoplasm. Its subcellular location is the cytosol. The protein localises to the peroxisome membrane. The catalysed reaction is ATP + H2O = ADP + phosphate + H(+). Functionally, component of the PEX1-PEX6 AAA ATPase complex, a protein dislocase complex that mediates the ATP-dependent extraction of the PEX5 receptor from peroxisomal membranes, an essential step for PEX5 recycling. Specifically recognizes PEX5 monoubiquitinated at 'Cys-6', and pulls it out of the peroxisome lumen through the PEX2-PEX10-PEX12 retrotranslocation channel. Extraction by the PEX1-PEX6 AAA ATPase complex is accompanied by unfolding of the TPR repeats and release of bound cargo from PEX5. This chain is Peroxisomal ATPase PEX6 (PEX6), found in Kluyveromyces lactis (strain ATCC 8585 / CBS 2359 / DSM 70799 / NBRC 1267 / NRRL Y-1140 / WM37) (Yeast).